A 373-amino-acid chain; its full sequence is Lipoyl synthase (373 aa).

The segment at 14–36 (VSNDHPSSSPLQPGVKQSGEDKI) is disordered. 7 residues coordinate [4Fe-4S] cluster: cysteine 81, cysteine 86, cysteine 92, cysteine 107, cysteine 111, cysteine 114, and serine 323. Residues 93-312 (FSHGTATFMI…EEYGMALGFS (220 aa)) enclose the Radical SAM core domain. Residues 346–373 (PAVSSTEHRERNTIASKSASKTESIHHR) form a disordered region. Polar residues predominate over residues 358–367 (TIASKSASKT).

Belongs to the radical SAM superfamily. Lipoyl synthase family. It depends on [4Fe-4S] cluster as a cofactor.

It localises to the cytoplasm. It carries out the reaction [[Fe-S] cluster scaffold protein carrying a second [4Fe-4S](2+) cluster] + N(6)-octanoyl-L-lysyl-[protein] + 2 oxidized [2Fe-2S]-[ferredoxin] + 2 S-adenosyl-L-methionine + 4 H(+) = [[Fe-S] cluster scaffold protein] + N(6)-[(R)-dihydrolipoyl]-L-lysyl-[protein] + 4 Fe(3+) + 2 hydrogen sulfide + 2 5'-deoxyadenosine + 2 L-methionine + 2 reduced [2Fe-2S]-[ferredoxin]. It participates in protein modification; protein lipoylation via endogenous pathway; protein N(6)-(lipoyl)lysine from octanoyl-[acyl-carrier-protein]: step 2/2. Its function is as follows. Catalyzes the radical-mediated insertion of two sulfur atoms into the C-6 and C-8 positions of the octanoyl moiety bound to the lipoyl domains of lipoate-dependent enzymes, thereby converting the octanoylated domains into lipoylated derivatives. The sequence is that of Lipoyl synthase from Xylella fastidiosa (strain M23).